The following is a 388-amino-acid chain: Ferrochelatase (388 aa).

2 residues coordinate Fe cation: His-196 and Glu-277.

Belongs to the ferrochelatase family.

It localises to the cytoplasm. The catalysed reaction is heme b + 2 H(+) = protoporphyrin IX + Fe(2+). The protein operates within porphyrin-containing compound metabolism; protoheme biosynthesis; protoheme from protoporphyrin-IX: step 1/1. Its function is as follows. Catalyzes the ferrous insertion into protoporphyrin IX. This chain is Ferrochelatase, found in Trichormus variabilis (strain ATCC 29413 / PCC 7937) (Anabaena variabilis).